Consider the following 558-residue polypeptide: Urocanate hydratase (558 aa).

NAD(+)-binding positions include 54–55 (GG), Gln-132, 178–180 (GMG), Glu-198, 244–245 (NA), 265–269 (QTSAH), 275–276 (YL), and Tyr-324. Residue Cys-412 is part of the active site. Position 494 (Gly-494) interacts with NAD(+).

Belongs to the urocanase family. The cofactor is NAD(+).

It is found in the cytoplasm. The catalysed reaction is 4-imidazolone-5-propanoate = trans-urocanate + H2O. The protein operates within amino-acid degradation; L-histidine degradation into L-glutamate; N-formimidoyl-L-glutamate from L-histidine: step 2/3. Functionally, catalyzes the conversion of urocanate to 4-imidazolone-5-propionate. The polypeptide is Urocanate hydratase (Acinetobacter baumannii (strain SDF)).